Here is a 229-residue protein sequence, read N- to C-terminus: MPPHFIDGEPHDHQHDRPRRVRVAGEPVRIGIGGPVGSGKTALVAALCRQLREELSLAVLTNDIYTTEDADFLRRHAVLPDERIAAVQTGGCPHTAIRDDITANLDAIDDLIAANPPLDLILVESGGDNLTATFSSGLIDVQIFVVDVAGGDKVPRKGGPGVTFSDLLVINKTDLAPMVGADLGVMRRDAERVREGRPTALISLTEDPSSGPALEWVREQVRTLADVHQ.

Residues 1–15 (MPPHFIDGEPHDHQH) show a composition bias toward basic and acidic residues. The tract at residues 1 to 20 (MPPHFIDGEPHDHQHDRPRR) is disordered. Residue 34 to 41 (GPVGSGKT) participates in GTP binding.

This sequence belongs to the SIMIBI class G3E GTPase family. UreG subfamily. In terms of assembly, homodimer. UreD, UreF and UreG form a complex that acts as a GTP-hydrolysis-dependent molecular chaperone, activating the urease apoprotein by helping to assemble the nickel containing metallocenter of UreC. The UreE protein probably delivers the nickel.

It localises to the cytoplasm. Facilitates the functional incorporation of the urease nickel metallocenter. This process requires GTP hydrolysis, probably effectuated by UreG. The chain is Urease accessory protein UreG from Rhodococcus jostii (strain RHA1).